The following is a 399-amino-acid chain: Zinc finger TRAF-type-containing protein 1 (399 aa).

Positions 1 to 13 are enriched in gly residues; sequence MSGAEEAGGGGPA. Residues 1-21 are disordered; it reads MSGAEEAGGGGPAAGPAGAVP. The RING-type; degenerate zinc finger occupies 106-151; that stretch reads CTVCLDLPKASVYQCTNGHLMCAGCFIHLLADARLKEEQATCPNCR. A TRAF-type zinc finger spans residues 152–210; the sequence is CEISKSLCCRNLAVEKAVSELPSECGFCLRQFPRSLLERHQKEECQDRVTQCKYKRIGC.

This sequence belongs to the ZFTRAF1 family. Interacts with LGALS3. As to expression, expressed in heart, brain, liver, testis and kidney.

It is found in the cytoplasm. Its subcellular location is the perinuclear region. The sequence is that of Zinc finger TRAF-type-containing protein 1 from Mus musculus (Mouse).